The sequence spans 360 residues: Decorin (360 aa).

A signal peptide spans 1–16 (MKATIIFLLVAQVSWA). A propeptide spanning residues 17–30 (GPFQQKGLFDFMLE) is cleaved from the precursor. O-linked (Xyl...) (glycosaminoglycan) serine glycosylation is present at serine 34. 2 cysteine pairs are disulfide-bonded: cysteine 55–cysteine 61 and cysteine 59–cysteine 68. LRR repeat units follow at residues 74 to 94 (EKVPKDLPPDTALLDLQNNKI), 95 to 118 (TEIKDGDFKNLKNLHTLILINNKI), 119 to 142 (SKISPGAFAPLVKLERLYLSKNQL), 143 to 163 (KELPEKMPKTLQELRVHENEI), 164 to 187 (TKVRKSVFNGLNQMIVVELGTNPL), 188 to 213 (KSSGIENGAFQGMKKLSYIRIADTNI), 214 to 234 (TTIPQGLPPSLTELHLDGNKI), 235 to 258 (TKVDAASLKGLNNLAKLGLSFNSI), 259 to 282 (SAVDNGSLANTPHLRELHLNNNKL), 283 to 305 (VKVPGGLADHKYIQVVYLHNNNI), 306 to 335 (SAIGSNDFCPPGYNTKKASYSGVSLFSNPV), and 336 to 360 (QYWEIQPSTFRCVYVRAAVQLGNYK). A glycan (N-linked (GlcNAc...) asparagine) is linked at asparagine 212. 2 N-linked (GlcNAc...) asparagine glycosylation sites follow: asparagine 263 and asparagine 304. An intrachain disulfide couples cysteine 314 to cysteine 347.

Belongs to the small leucine-rich proteoglycan (SLRP) family. SLRP class I subfamily. In terms of assembly, binds to type I and type II collagen, fibronectin and TGF-beta. Forms a ternary complex with MFAP2 and ELN. Interacts with DPT. Post-translationally, the attached glycosaminoglycan chain can be either chondroitin 4-sulfate, chondroitin 6-sulfate or dermatan sulfate, depending upon the tissue of origin.

The protein resides in the secreted. It localises to the extracellular space. It is found in the extracellular matrix. In terms of biological role, may affect the rate of fibrils formation. The polypeptide is Decorin (DCN) (Bos taurus (Bovine)).